We begin with the raw amino-acid sequence, 67 residues long: Probable Sec-independent protein translocase protein TatE (67 aa).

Residues I4–G21 traverse the membrane as a helical segment.

The protein belongs to the TatA/E family. TatE subfamily.

The protein resides in the cell inner membrane. Part of the twin-arginine translocation (Tat) system that transports large folded proteins containing a characteristic twin-arginine motif in their signal peptide across membranes. TatE shares overlapping functions with TatA. This chain is Probable Sec-independent protein translocase protein TatE, found in Salmonella dublin (strain CT_02021853).